A 314-amino-acid polypeptide reads, in one-letter code: Ferrochelatase (314 aa).

Positions 184 and 259 each coordinate Fe cation.

Belongs to the ferrochelatase family.

Its subcellular location is the cytoplasm. The catalysed reaction is heme b + 2 H(+) = protoporphyrin IX + Fe(2+). Its pathway is porphyrin-containing compound metabolism; protoheme biosynthesis; protoheme from protoporphyrin-IX: step 1/1. Its function is as follows. Catalyzes the ferrous insertion into protoporphyrin IX. The protein is Ferrochelatase of Chlamydia trachomatis serovar L2 (strain ATCC VR-902B / DSM 19102 / 434/Bu).